Consider the following 532-residue polypeptide: Glucose-6-phosphate isomerase (532 aa).

Glu-330 acts as the Proton donor in catalysis. Catalysis depends on residues His-359 and Lys-461.

The protein belongs to the GPI family.

Its subcellular location is the cytoplasm. It catalyses the reaction alpha-D-glucose 6-phosphate = beta-D-fructose 6-phosphate. It functions in the pathway carbohydrate biosynthesis; gluconeogenesis. Its pathway is carbohydrate degradation; glycolysis; D-glyceraldehyde 3-phosphate and glycerone phosphate from D-glucose: step 2/4. Catalyzes the reversible isomerization of glucose-6-phosphate to fructose-6-phosphate. This chain is Glucose-6-phosphate isomerase, found in Synechococcus sp. (strain CC9605).